Consider the following 1593-residue polypeptide: MGFCGDEPFTVWHNDSGDFSKCFEDSVVMTLPAIYLLIFGMKRLYYLENKKPDLFTLKQLSQDFQTWRKTLQLEVIVSILLVAWKILFFIVIVSIYNKPFEILYSVVTVVQWTVSLGLVYLEMKKGQSRSWEIRLYWVFAFFVATVKLRTLTLAIAGKSIYNVGFLEYFSYFVGYCLILILSITSVLFFDNLESYQNLEENEISKEVNANLFSRLTFWWINSVLVKGHKKALEISDVPTLGEIDQSILLSEKFEKAWEEQLKKPNPSLPWALAKAFGPHFYIAALFKIIQDLLIFVGPTLLKRVLGFVESRDGSQDTYDGLIYALLYFLAPVVQSLLLHQYFHRCYRVGMWLRSAVVTAVYKKALKTSLREGTTIGEIVNLMSVDAQKFMDLCPYLHMIWSAPLQLAISLVLLYRILNASVFAGLGIMLVMIPINLAISNLAKKRQTISMKLKDRRTKAVNEVLNGIKVIKLYSWEQSFMDHVNEIRNKELDVMKAIKYIQGFSLLLWSMSPVFVSVSTFTVYILTGQVLSATQAFPALSLFNVMQFPINMLPSVVSSIIEASVSVARLQKFLLKKDLDPNVVEHHINEPGIAVKIDNATLEWEPNKPILHDINLTIKKGELVAIVGQVGSGKSSIVSSLVGDLDKTKGTVAVNGSVALVSQQAWIQNATLKNNILFAKELNQDKYQSVVQACCLEPDIKILPGGDQTEIGEKGINLSGGQKQRVSIARAVYNNADIYIFDDPLSAVDAHVGKAIFKNVLSNQDGILCNKTRILVTHAVHYLPYVDRIILMKDGRIVEEGDFNTLIEAGSHFTELMSHDEQQQQLQQQQAPDKSSDSNEQIGGGDNKESENNEEQNEEEEGENENLLEKVLRKSRSRSPSPSSNRNIDGDDIASGSILQTTRTPEEDEQDERELMEDIDIDGGENIQTPLQKGEKSSVLKQPLRLLKKLPTSINKKLNNSGSGVSLKPITTVNAKPQDKNKIISVETKQEGKVSFKIYLSYFKAIGVLLATCIIGFYVLTQLLSILANWWISIWTNSYGGNGNGSGSGSISLSSSSTVEDNEKAKYYLSIYVAFSCGTIAATFLRSFSMVFGSIKGSKLFHEKMFKAVILSPMSFFDTTPIGRILNRFSKDQLTIDESIARTLGMFLNTFCQVVGSIIVIAWVSPFIILAMVPVGALFYFIQKYYLNSSRELTRLEGVSRSPIYAHFSETLAGVTTIRAFKDVARFVTENERLLDENQKCYYINISSNRWLAIRLEFLGACLVSCAVLYTVLARSRIEAGTAGLVITYALAITGNMNWMVRMSCDLENSVVSIERIQEYCLLPSEAPLFNDKSVPMSWPSHGKIVFKNLWLTYREGLDPVLRGINCTIEPKTKVGIVGRTGAGKSSLTQALFRLVEPLRGTIEIDGIDITELGLNPLRSRMAIIPQDPVLFAGSVRYNLDPFDQYDDHEIWEAIENAHLLKAIKDLDGGLDAMVQDGGDNFSVGQRQLLVIGRALLKKANIIVLDEASSSIDIASDALIQETIRTKFADCTVLTIAHRLGTIADSDKIMVLDKGELIEYDSPSELLKNQDSIYYSLVKASESKQNIDNDDESN.

A run of 10 helical transmembrane segments spans residues 27 to 47 (VVMT…LYYL), 75 to 95 (VIVS…IVSI), 100 to 120 (FEIL…GLVY), 135 to 155 (LYWV…TLAI), 169 to 189 (FSYF…VLFF), 280 to 300 (FYIA…GPTL), 318 to 338 (YDGL…SLLL), 392 to 412 (LCPY…SLVL), 419 to 439 (ASVF…LAIS), and 505 to 525 (LLLW…VYIL). Residues 280 to 561 (FYIAALFKII…LPSVVSSIIE (282 aa)) enclose the ABC transmembrane type-1 1 domain. An ABC transporter 1 domain is found at 594-818 (VKIDNATLEW…GSHFTELMSH (225 aa)). ATP is bound at residue 627-634 (GQVGSGKS). A disordered region spans residues 816 to 938 (MSHDEQQQQL…PLQKGEKSSV (123 aa)). Residues 844-875 (GDNKESENNEEQNEEEEGENENLLEKVLRKSR) are a coiled coil. A compositionally biased stretch (acidic residues) spans 851-865 (NNEEQNEEEEGENEN). A compositionally biased stretch (low complexity) spans 877–886 (RSPSPSSNRN). Residues 905–922 (EEDEQDERELMEDIDIDG) show a composition bias toward acidic residues. Transmembrane regions (helical) follow at residues 1005–1025 (IGVL…LLSI), 1064–1084 (AKYY…ATFL), 1157–1177 (IIVI…VGAL), 1251–1271 (LAIR…LYTV), and 1280–1300 (GTAG…NWMV). Positions 1010 to 1308 (ATCIIGFYVL…MVRMSCDLEN (299 aa)) constitute an ABC transmembrane type-1 2 domain. The region spanning 1344-1578 (IVFKNLWLTY…QDSIYYSLVK (235 aa)) is the ABC transporter 2 domain. 1378-1385 (GRTGAGKS) contributes to the ATP binding site.

The protein belongs to the ABC transporter superfamily. ABCC family. Conjugate transporter (TC 3.A.1.208) subfamily.

The protein localises to the membrane. This is ABC transporter C family member 8 (abcC8) from Dictyostelium discoideum (Social amoeba).